The primary structure comprises 187 residues: Large ribosomal subunit protein uL10 (187 aa).

Belongs to the universal ribosomal protein uL10 family. Part of the ribosomal stalk of the 50S ribosomal subunit. The N-terminus interacts with L11 and the large rRNA to form the base of the stalk. The C-terminus forms an elongated spine to which L12 dimers bind in a sequential fashion forming a multimeric L10(L12)X complex.

Functionally, forms part of the ribosomal stalk, playing a central role in the interaction of the ribosome with GTP-bound translation factors. This is Large ribosomal subunit protein uL10 from Synechococcus sp. (strain JA-3-3Ab) (Cyanobacteria bacterium Yellowstone A-Prime).